Reading from the N-terminus, the 274-residue chain is Short-chain dehydrogenase/reductase bsc3 (274 aa).

NADP(+) is bound by residues isoleucine 14, tyrosine 170, lysine 174, isoleucine 203, and threonine 205. The Proton donor role is filled by tyrosine 170. Lysine 174 acts as the Lowers pKa of active site Tyr in catalysis.

This sequence belongs to the short-chain dehydrogenases/reductases (SDR) family.

The protein operates within mycotoxin biosynthesis. Its function is as follows. Short-chain dehydrogenase/reductase; part of the gene cluster that mediates the biosynthesis of the diterpene glucoside brassicicene C. In the first step of the brassicicene C biosynthesis, the bifunctional diterpene synthase bsc8 that possesses both prenyl transferase and terpene cyclase activity, converts isopentenyl diphosphate and dimethylallyl diphosphate into geranylgeranyl diphosphate (GGDP) that is further converted into fusicocca-2,10(14)-diene, the first precursor for brassicicene C. Fusicocca-2,10(14)-diene is then substrate of cytochrome P450 monooxygenase bsc1 for hydroxylation at the C-8 position. Oxidation at C-16 position to aldehyde is then catalyzed by the cytochrome P450 monooyxygenase bsc7, yielding fusicocca-2,10(14)-diene-8-beta,16-diol. Follows the isomerization of the double bond and reduction of aldehyde to alcohol catalyzed by the short-chain dehydrogenase/reductase bsc3 to yield the diol compound fusicocca-1,10(14)-diene-8 beta,16-diol. The next step is the oxidation at the C-3 position of fusicocca-2,10(14)-diene-8-beta,16-diol catalyzed by the alpha-ketoglutarate dependent dioxygenase bsc9, to produce a triol compound. Methylation of the hydroxy group at position 16 is performed by the methyltransferase bsc6. 16-O-methylation is followed by oxidation at the C-13 position to ketone and an alkyl shift of the methyl group leads to brassicicene C. Although the probable acetyltransferase bsc4 is included in the gene cluster, no acetylation reactions are necessary for brassicicene C biosynthesis. However, the fact that brassicicene E, which is a structurally related compound having an acetoxy group at position 12, was previously isolated from another strain of A.brassicicola suggests that the ATCC 96836 strain might also produce a small amount of brassicicene E. In Alternaria brassicicola (Dark leaf spot agent), this protein is Short-chain dehydrogenase/reductase bsc3.